The following is a 438-amino-acid chain: Transcription termination factor Rho (438 aa).

The region spanning 70–145 (YILFTGILEI…LKIEAINYLP (76 aa)) is the Rho RNA-BD domain. ATP-binding positions include 188–193 (GKGQRA), 200–205 (RTGKTE), and R231.

The protein belongs to the Rho family. In terms of assembly, homohexamer. The homohexamer assembles into an open ring structure.

Functionally, facilitates transcription termination by a mechanism that involves Rho binding to the nascent RNA, activation of Rho's RNA-dependent ATPase activity, and release of the mRNA from the DNA template. This is Transcription termination factor Rho from Helicobacter pylori (strain J99 / ATCC 700824) (Campylobacter pylori J99).